A 121-amino-acid polypeptide reads, in one-letter code: Small ribosomal subunit protein uS13 (121 aa).

The segment at 91 to 121 (HRMSLPVRGQRTRTNARTRRGSRKTVAGRKK) is disordered. Basic residues predominate over residues 100 to 121 (QRTRTNARTRRGSRKTVAGRKK).

It belongs to the universal ribosomal protein uS13 family. As to quaternary structure, part of the 30S ribosomal subunit. Forms a loose heterodimer with protein S19. Forms two bridges to the 50S subunit in the 70S ribosome.

Functionally, located at the top of the head of the 30S subunit, it contacts several helices of the 16S rRNA. In the 70S ribosome it contacts the 23S rRNA (bridge B1a) and protein L5 of the 50S subunit (bridge B1b), connecting the 2 subunits; these bridges are implicated in subunit movement. Contacts the tRNAs in the A and P-sites. The protein is Small ribosomal subunit protein uS13 of Prochlorococcus marinus (strain MIT 9312).